Reading from the N-terminus, the 471-residue chain is Alpha-galactosidase 6 (471 aa).

Residues 1-18 form the signal peptide; it reads MFAFYFLTACISLKGVFG. Cys-42 and Cys-74 are oxidised to a cystine. 2 residues coordinate substrate: Asp-72 and Asp-73. An N-linked (GlcNAc...) asparagine glycan is attached at Asn-105. Residues Cys-121 and Cys-151 are joined by a disulfide bond. Residue Lys-147 coordinates substrate. Asp-149 acts as the Nucleophile in catalysis. Asn-175 is a glycosylation site (N-linked (GlcNAc...) asparagine). Residue Arg-205 participates in substrate binding. Asp-209 serves as the catalytic Proton donor. Cystine bridges form between Cys-221–Cys-237 and Cys-223–Cys-230. Gln-251 is a binding site for substrate. 6 N-linked (GlcNAc...) asparagine glycosylation sites follow: Asn-270, Asn-370, Asn-403, Asn-422, Asn-435, and Asn-454.

It belongs to the glycosyl hydrolase 27 family. In terms of assembly, homotetramer.

It is found in the secreted. The enzyme catalyses Hydrolysis of terminal, non-reducing alpha-D-galactose residues in alpha-D-galactosides, including galactose oligosaccharides, galactomannans and galactolipids.. In Saccharomyces cerevisiae (Baker's yeast), this protein is Alpha-galactosidase 6 (MEL6).